A 115-amino-acid polypeptide reads, in one-letter code: MRYVASYLLAALGGNTSPSAKDIKKXLDSVGIEADXDRLNKVISELNGKNIEDVIAQGIGKLASVPSGGAXAVAAAPGSXAPAAGSAPAAAEEKKEEKKEESEESDDDMGFGLFD.

Methionine 1 is modified (N-acetylmethionine). 2 positions are modified to phosphoserine: serine 17 and serine 19. Residue lysine 21 is modified to N6-acetyllysine; alternate. Lysine 21 carries the N6-succinyllysine; alternate modification. Residues 69 to 90 (GAXAVAAAPGSXAPAAGSAPAA) show a composition bias toward low complexity. The tract at residues 69 to 115 (GAXAVAAAPGSXAPAAGSAPAAAEEKKEEKKEESEESDDDMGFGLFD) is disordered. 2 positions are modified to phosphoserine: serine 79 and serine 86. Residues 91–101 (AEEKKEEKKEE) are compositionally biased toward basic and acidic residues. Serine 102 and serine 105 each carry phosphoserine.

It belongs to the eukaryotic ribosomal protein P1/P2 family. As to quaternary structure, heterodimer with RPLP1 at the lateral ribosomal stalk of the large ribosomal subunit.

Its function is as follows. Plays an important role in the elongation step of protein synthesis. In Sus scrofa (Pig), this protein is Large ribosomal subunit protein P2 (RPLP2).